Consider the following 247-residue polypeptide: Adiponectin (247 aa).

A signal peptide spans 1–17 (MLLLQALLFLLILPSHA). O-linked (GalNAc...) threonine glycans are attached at residues Thr-23 and Thr-24. Lys-36 is subject to 5-hydroxylysine. At Cys-39 the chain carries S-(2-succinyl)cysteine. The tract at residues 44 to 105 (AGIPGHPGHN…GFPGTPGRKG (62 aa)) is disordered. The Collagen-like domain maps to 45–110 (GIPGHPGHNG…PGRKGEPGEA (66 aa)). 3 positions are modified to 4-hydroxyproline: Pro-47, Pro-50, and Pro-56. The segment covering 58 to 73 (RDGRDGTPGEKGEKGD) has biased composition (basic and acidic residues). 5-hydroxylysine; alternate is present on residues Lys-68, Lys-71, and Lys-80. 3 O-linked (Gal...) hydroxylysine; alternate glycosylation sites follow: Lys-68, Lys-71, and Lys-80. Pro-94 is modified (4-hydroxyproline). Lys-104 bears the 5-hydroxylysine; alternate mark. Lys-104 is a glycosylation site (O-linked (Gal...) hydroxylysine; alternate). Positions 111–247 (AYVYRSAFSV…TGFLLYHDTN (137 aa)) constitute a C1q domain.

In terms of assembly, homomultimer. Forms trimers, hexamers and 12- to 18-mers. The trimers (low molecular weight complexes / LMW) are assembled via non-covalent interactions of the collagen-like domains in a triple helix and hydrophobic interactions within the globular C1q domain. Several trimers can associate to form disulfide-linked hexamers (middle molecular weight complexes / MMW) and larger complexes (higher molecular weight / HMW). The HMW-complex assembly is also modulated by the degree of lysine hydroxylation and glycosylation. LMW, MMW and HMW complexes bind to HBEGF, MMW and HMW complexes bind to PDGFB, and HMW complex binds to FGF2. Interacts with CTRP9 via the C1q domain (heterotrimeric complex). Post-translationally, HMW complexes are more extensively glycosylated than smaller oligomers. Hydroxylation and glycosylation of the lysine residues within the collagen-like domain of adiponectin seem to be critically involved in regulating the formation and/or secretion of HMW complexes and consequently contribute to the insulin-sensitizing activity of adiponectin in hepatocytes. In terms of processing, O-glycosylated. Not N-glycosylated O-linked glycans on hydroxylysine residues consist of Glc-Gal disaccharides bound to the oxygen atom of post-translationally added hydroxyl groups. O-linked glycosylation in the N-terminal is disialylated with the structure Neu5Acalpha2-&gt;8Neu5Acalpha2-&gt;3Gal. Sialylated by alpha 2,8-sialyltransferase III. Succination of Cys-39 by the Krebs cycle intermediate fumarate, which leads to S-(2-succinyl)cysteine residues, inhibits polymerization and secretion of adiponectin. Adiponectin is a major target for succination in both adipocytes and adipose tissue of diabetic mice. It was proposed that succination of proteins is a biomarker of mitochondrial stress and accumulation of Krebs cycle intermediates in adipose tissue in diabetes and that succination of adiponectin may contribute to the decrease in plasma adiponectin in diabetes. As to expression, synthesized exclusively by adipocytes and secreted into plasma.

Its subcellular location is the secreted. Its activity is regulated as follows. Polymerization and secretion of adiponectin is inhibited by succination of cysteine residues by the Krebs cycle intermediate fumarate, which leads to S-(2-succinyl)cysteine residues. Its function is as follows. Important adipokine involved in the control of fat metabolism and insulin sensitivity, with direct anti-diabetic, anti-atherogenic and anti-inflammatory activities. Stimulates AMPK phosphorylation and activation in the liver and the skeletal muscle, enhancing glucose utilization and fatty-acid combustion. Antagonizes TNF-alpha by negatively regulating its expression in various tissues such as liver and macrophages, and also by counteracting its effects. Inhibits endothelial NF-kappa-B signaling through a cAMP-dependent pathway. May play a role in cell growth, angiogenesis and tissue remodeling by binding and sequestering various growth factors with distinct binding affinities, depending on the type of complex, LMW, MMW or HMW. The sequence is that of Adiponectin (Adipoq) from Mus musculus (Mouse).